We begin with the raw amino-acid sequence, 253 residues long: MSAYPKFDVILKALNLSSVGVIITDPEQKNNPIIFVNTGFENITGYTKEEAIGSNCHFLQGDDTDKEEVAKIRHAINEKSTANVLLKNYRKNGTSFMNELTIEPIYDDNDHLYFVGIQKDVTTEHNYQLELEKSLWEIEKLSTPIVPIKENICVLPLIGSLTHDRFQHMSDYVSEYMDNGKEDYLIMDLSGLADFNEDAVMNLVKFHGFMKLTGVELIITGISPKFAMTLMRYQENLSSLTTYSTIKEALQFY.

Residues 6–79 (KFDVILKALN…AKIRHAINEK (74 aa)) enclose the PAS domain. Cysteine 56 carries the S-4a-FMN cysteine modification. A PAC domain is found at 80 to 133 (STANVLLKNYRKNGTSFMNELTIEPIYDDNDHLYFVGIQKDVTTEHNYQLELEK). The STAS domain maps to 142–253 (STPIVPIKEN…STIKEALQFY (112 aa)).

In terms of processing, FMN binds covalently to cysteine after exposure to blue light and this bond is spontaneously broken in the dark.

In terms of biological role, exhibits the same spectroscopical features and blue-light induced photochemistry as plants phototropins, with the reversible formation of a blue-shifted photoproduct, assigned to an FMN-cysteine thiol adduct. Positive regulator in the activation of the general stress transcription factor sigma-B. This Listeria innocua serovar 6a (strain ATCC BAA-680 / CLIP 11262) protein is Blue-light photoreceptor.